A 473-amino-acid polypeptide reads, in one-letter code: Hyaluronidase-2 (473 aa).

The signal sequence occupies residues 1–20 (MRAGLGPIITLALVLEVAWA). Cystine bridges form between cysteine 47-cysteine 340 and cysteine 211-cysteine 227. N-linked (GlcNAc...) asparagine glycosylation is found at asparagine 74 and asparagine 103. Glutamate 135 acts as the Proton donor in catalysis. Asparagine 357 carries N-linked (GlcNAc...) asparagine glycosylation. The 79-residue stretch at 361–439 (ATQYCSWTQC…YLGWGGEQCQ (79 aa)) folds into the EGF-like domain. 3 disulfide bridges follow: cysteine 365–cysteine 376, cysteine 370–cysteine 427, and cysteine 429–cysteine 438. Residue aspartate 448 is the site of GPI-anchor amidated aspartate attachment. Positions 449-473 (ASRAWAGAHLASLLGLVAMTLTWTL) are cleaved as a propeptide — removed in mature form.

The protein belongs to the glycosyl hydrolase 56 family. Interacts with MST1R.

The protein resides in the cell membrane. The catalysed reaction is Random hydrolysis of (1-&gt;4)-linkages between N-acetyl-beta-D-glucosamine and D-glucuronate residues in hyaluronate.. Its function is as follows. Catalyzes hyaluronan degradation into small fragments that are endocytosed and degraded in lysosomes by HYAL1 and exoglycosidases. Essential for the breakdown of extracellular matrix hyaluronan. The protein is Hyaluronidase-2 (Hyal2) of Rattus norvegicus (Rat).